Here is a 118-residue protein sequence, read N- to C-terminus: Beta-elicitin cryptogein (118 aa).

A signal peptide spans 1-20 (MNFTALLAAVAAALVGSANA). Intrachain disulfides connect Cys23–Cys91, Cys47–Cys76, and Cys71–Cys115.

It belongs to the elicitin family.

The protein resides in the secreted. Functionally, induces local and distal defense responses (incompatible hypersensitive reaction) in plants from the solanaceae and cruciferae families. Elicits leaf necrosis and causes the accumulation of pathogenesis-related proteins. Might interact with the lipidic molecules of the plasma membrane. The polypeptide is Beta-elicitin cryptogein (Phytophthora cryptogea).